Consider the following 603-residue polypeptide: Elongation factor 4 (603 aa).

The region spanning 7–189 is the tr-type G domain; the sequence is SHIRNFSIIA…SIVHLVPPPR (183 aa). GTP contacts are provided by residues 19–24 and 136–139; these read DHGKST and NKID.

Belongs to the TRAFAC class translation factor GTPase superfamily. Classic translation factor GTPase family. LepA subfamily.

The protein resides in the cell inner membrane. The catalysed reaction is GTP + H2O = GDP + phosphate + H(+). In terms of biological role, required for accurate and efficient protein synthesis under certain stress conditions. May act as a fidelity factor of the translation reaction, by catalyzing a one-codon backward translocation of tRNAs on improperly translocated ribosomes. Back-translocation proceeds from a post-translocation (POST) complex to a pre-translocation (PRE) complex, thus giving elongation factor G a second chance to translocate the tRNAs correctly. Binds to ribosomes in a GTP-dependent manner. The chain is Elongation factor 4 from Thermosynechococcus vestitus (strain NIES-2133 / IAM M-273 / BP-1).